Reading from the N-terminus, the 93-residue chain is Defensin 5 (93 aa).

Positions 1 to 19 (MKKLVLLSALVLLALQVEA) are cleaved as a signal peptide. Residues 20–58 (EPTPKTDEGTKTDEQPGKEDQVVSVSIEGQGDPAFQDAV) constitute a propeptide that is removed on maturation. 3 disulfide bridges follow: Cys-64–Cys-92, Cys-66–Cys-81, and Cys-71–Cys-91.

The protein belongs to the alpha-defensin family. As to expression, small intestine. Not present in heart, liver, spleen, kidney, large intestine and colon.

It is found in the secreted. Functionally, probably contributes to the antimicrobial barrier function of the small intestine. The polypeptide is Defensin 5 (Rattus norvegicus (Rat)).